We begin with the raw amino-acid sequence, 119 residues long: Large ribosomal subunit protein uL18 (119 aa).

It belongs to the universal ribosomal protein uL18 family. In terms of assembly, part of the 50S ribosomal subunit; part of the 5S rRNA/L5/L18/L25 subcomplex. Contacts the 5S and 23S rRNAs.

Its function is as follows. This is one of the proteins that bind and probably mediate the attachment of the 5S RNA into the large ribosomal subunit, where it forms part of the central protuberance. The sequence is that of Large ribosomal subunit protein uL18 from Nitratidesulfovibrio vulgaris (strain DSM 19637 / Miyazaki F) (Desulfovibrio vulgaris).